A 543-amino-acid chain; its full sequence is CTP synthase (543 aa).

The tract at residues Met1 to Leu265 is amidoligase domain. Ser13 lines the CTP pocket. Ser13 contacts UTP. ATP-binding positions include Ser14–Ile19 and Asp71. The Mg(2+) site is built by Asp71 and Glu139. CTP-binding positions include Asp146–Glu148, Lys186–Gln191, and Lys222. UTP contacts are provided by residues Lys186–Gln191 and Lys222. One can recognise a Glutamine amidotransferase type-1 domain in the interval Thr290–Arg541. Residue Gly351 participates in L-glutamine binding. Cys378 functions as the Nucleophile; for glutamine hydrolysis in the catalytic mechanism. L-glutamine contacts are provided by residues Leu379–Gln382, Glu402, and Arg469. Catalysis depends on residues His514 and Glu516.

Belongs to the CTP synthase family. In terms of assembly, homotetramer.

The enzyme catalyses UTP + L-glutamine + ATP + H2O = CTP + L-glutamate + ADP + phosphate + 2 H(+). It carries out the reaction L-glutamine + H2O = L-glutamate + NH4(+). It catalyses the reaction UTP + NH4(+) + ATP = CTP + ADP + phosphate + 2 H(+). Its pathway is pyrimidine metabolism; CTP biosynthesis via de novo pathway; CTP from UDP: step 2/2. Its activity is regulated as follows. Allosterically activated by GTP, when glutamine is the substrate; GTP has no effect on the reaction when ammonia is the substrate. The allosteric effector GTP functions by stabilizing the protein conformation that binds the tetrahedral intermediate(s) formed during glutamine hydrolysis. Inhibited by the product CTP, via allosteric rather than competitive inhibition. Catalyzes the ATP-dependent amination of UTP to CTP with either L-glutamine or ammonia as the source of nitrogen. Regulates intracellular CTP levels through interactions with the four ribonucleotide triphosphates. In Saccharophagus degradans (strain 2-40 / ATCC 43961 / DSM 17024), this protein is CTP synthase.